We begin with the raw amino-acid sequence, 161 residues long: ATP synthase subunit b' (161 aa).

A helical membrane pass occupies residues 30–47 (VMAIQFLVLAALLNKLFY).

It belongs to the ATPase B chain family. As to quaternary structure, F-type ATPases have 2 components, F(1) - the catalytic core - and F(0) - the membrane proton channel. F(1) has five subunits: alpha(3), beta(3), gamma(1), delta(1), epsilon(1). F(0) has four main subunits: a(1), b(1), b'(1) and c(10-14). The alpha and beta chains form an alternating ring which encloses part of the gamma chain. F(1) is attached to F(0) by a central stalk formed by the gamma and epsilon chains, while a peripheral stalk is formed by the delta, b and b' chains.

The protein resides in the cellular thylakoid membrane. Its function is as follows. F(1)F(0) ATP synthase produces ATP from ADP in the presence of a proton or sodium gradient. F-type ATPases consist of two structural domains, F(1) containing the extramembraneous catalytic core and F(0) containing the membrane proton channel, linked together by a central stalk and a peripheral stalk. During catalysis, ATP synthesis in the catalytic domain of F(1) is coupled via a rotary mechanism of the central stalk subunits to proton translocation. Component of the F(0) channel, it forms part of the peripheral stalk, linking F(1) to F(0). The b'-subunit is a diverged and duplicated form of b found in plants and photosynthetic bacteria. The polypeptide is ATP synthase subunit b' (Picosynechococcus sp. (strain ATCC 27264 / PCC 7002 / PR-6) (Agmenellum quadruplicatum)).